We begin with the raw amino-acid sequence, 220 residues long: Urease accessory protein UreE (220 aa).

Residues 145–220 (EGGAYSAGGH…QIHKRRPDNL (76 aa)) are disordered. Positions 156-177 (HGHDHGSHEHSAHDHGKHDHAP) are enriched in basic and acidic residues. Residues 178 to 188 (AKPATAATPAA) are compositionally biased toward low complexity. Over residues 191–206 (HGPDCNHGHDHAHEAK) the composition is skewed to basic and acidic residues.

It belongs to the UreE family.

It localises to the cytoplasm. Involved in urease metallocenter assembly. Binds nickel. Probably functions as a nickel donor during metallocenter assembly. This Polaromonas sp. (strain JS666 / ATCC BAA-500) protein is Urease accessory protein UreE.